A 615-amino-acid chain; its full sequence is Dolichyl-diphosphooligosaccharide--protein glycosyltransferase subunit 1A (615 aa).

Positions 1 to 28 (MATPPPLRRVAALLLLLVAAASTPTARA) are cleaved as a signal peptide. Over 29–437 (DLVVTRADRK…RFNNISLLRE (409 aa)) the chain is Lumenal. K187 is modified (N6-acetyllysine). N300, N353, and N431 each carry an N-linked (GlcNAc...) asparagine glycan. Residues 438–455 (PMMLITGFFLLFMACIVY) form a helical membrane-spanning segment. Residues 456 to 615 (MRTDMSISKN…ESLLEYISEI (160 aa)) lie on the Cytoplasmic side of the membrane.

This sequence belongs to the OST1 family. Component of the oligosaccharyltransferase (OST) complex.

The protein localises to the endoplasmic reticulum membrane. It functions in the pathway protein modification; protein glycosylation. Its function is as follows. Subunit of the oligosaccharyl transferase (OST) complex that catalyzes the initial transfer of a defined glycan (Glc(3)Man(9)GlcNAc(2) in eukaryotes) from the lipid carrier dolichol-pyrophosphate to an asparagine residue within an Asn-X-Ser/Thr consensus motif in nascent polypeptide chains, the first step in protein N-glycosylation. N-glycosylation occurs cotranslationally and the complex associates with the Sec61 complex at the channel-forming translocon complex that mediates protein translocation across the endoplasmic reticulum (ER). All subunits are required for a maximal enzyme activity. This is Dolichyl-diphosphooligosaccharide--protein glycosyltransferase subunit 1A (OST1A) from Oryza sativa subsp. japonica (Rice).